The primary structure comprises 294 residues: ATP synthase gamma chain (294 aa).

This sequence belongs to the ATPase gamma chain family. F-type ATPases have 2 components, CF(1) - the catalytic core - and CF(0) - the membrane proton channel. CF(1) has five subunits: alpha(3), beta(3), gamma(1), delta(1), epsilon(1). CF(0) has three main subunits: a, b and c.

It localises to the cell inner membrane. Its function is as follows. Produces ATP from ADP in the presence of a proton gradient across the membrane. The gamma chain is believed to be important in regulating ATPase activity and the flow of protons through the CF(0) complex. The protein is ATP synthase gamma chain of Nitratiruptor sp. (strain SB155-2).